Here is a 756-residue protein sequence, read N- to C-terminus: Subtilisin-like protease SBT3.9 (756 aa).

Residues Met-1–Ala-25 form the signal peptide. The propeptide at Glu-26–Thr-108 is activation peptide. The region spanning Val-29 to Glu-106 is the Inhibitor I9 domain. Residues Thr-112–Val-603 form the Peptidase S8 domain. Asp-142 acts as the Charge relay system in catalysis. N-linked (GlcNAc...) asparagine glycans are attached at residues Asn-175 and Asn-202. The active-site Charge relay system is the His-218. N-linked (GlcNAc...) asparagine glycosylation is found at Asn-233, Asn-357, Asn-395, and Asn-519. Residues Asp-386 to Ile-460 enclose the PA domain. Ser-534 serves as the catalytic Charge relay system.

It belongs to the peptidase S8 family.

It localises to the secreted. The chain is Subtilisin-like protease SBT3.9 from Arabidopsis thaliana (Mouse-ear cress).